The primary structure comprises 156 residues: MASYFDEHDCEPTNPEEQYRQNALLELARSLMQGLDIDSGSFDLSDWDQRLPPPAAKAVVQSLPVVIISPEQADKGVKCPVCLLEFEEQESVREMPCKHLFHTGCILPWLNKTNSCPLCRLELPTDNADYEEFKKDKERRRQREHRLEDLHGAMYT.

The RING-type; atypical zinc finger occupies 79 to 120; the sequence is CPVCLLEFEEQESVREMPCKHLFHTGCILPWLNKTNSCPLCR. The tract at residues 135-156 is disordered; it reads KDKERRRQREHRLEDLHGAMYT.

Belongs to the RNF181 family.

The catalysed reaction is S-ubiquitinyl-[E2 ubiquitin-conjugating enzyme]-L-cysteine + [acceptor protein]-L-lysine = [E2 ubiquitin-conjugating enzyme]-L-cysteine + N(6)-ubiquitinyl-[acceptor protein]-L-lysine.. The protein operates within protein modification; protein ubiquitination. E3 ubiquitin-protein ligase which accepts ubiquitin from an E2 ubiquitin-conjugating enzyme in the form of a thioester and then directly transfers the ubiquitin to targeted substrates. Catalyzes monoubiquitination of 26S proteasome subunit PSMC2/RPT1. The polypeptide is E3 ubiquitin-protein ligase RNF181 (rnf181) (Danio rerio (Zebrafish)).